A 71-amino-acid chain; its full sequence is Non-structural protein 3x (71 aa).

The chain is Non-structural protein 3x from Feline coronavirus (strain FIPV WSU-79/1146) (FCoV).